The chain runs to 611 residues: Lanthanide-dependent methanol dehydrogenase (611 aa).

An N-terminal signal peptide occupies residues 1–34; sequence MTVKLKKPKKYAVAKNATLLAAFGLIGSLSLAKA. Cysteine 138 and cysteine 139 form a disulfide bridge. Positions 144, 188, 203, 204, and 205 each coordinate pyrroloquinoline quinone. Glutamate 206 contributes to the Ce(3+) binding site. Glutamate 206 contributes to the Eu(3+) binding site. Pyrroloquinoline quinone-binding residues include threonine 270 and tryptophan 272. Ce(3+) contacts are provided by asparagine 290, aspartate 333, and aspartate 335. 3 residues coordinate Eu(3+): asparagine 290, aspartate 333, and aspartate 335. A pyrroloquinoline quinone-binding site is contributed by arginine 360. Cysteine 414 and cysteine 443 are disulfide-bonded. The pyrroloquinoline quinone site is built by tryptophan 501 and tryptophan 566.

This sequence belongs to the bacterial PQQ dehydrogenase family. Homodimer. Ce(3+) is required as a cofactor. It depends on La(3+) as a cofactor. The cofactor is Nd(3+). Requires Pr(3+) as cofactor. Eu(3+) serves as cofactor. Pyrroloquinoline quinone is required as a cofactor.

Its subcellular location is the periplasm. The catalysed reaction is 2 Fe(III)-[cytochrome cL] + methanol = 2 Fe(II)-[cytochrome cL] + formaldehyde + 2 H(+). It carries out the reaction 4 Fe(III)-[cytochrome cL] + methanol + H2O = 4 Fe(II)-[cytochrome cL] + formate + 5 H(+). It catalyses the reaction 2 Fe(III)-[cytochrome cL] + a primary alcohol = 2 Fe(II)-[cytochrome cL] + an aldehyde + 2 H(+). The protein operates within one-carbon metabolism; methanol degradation. Functionally, catalyzes the oxidation of methanol to formaldehyde or formate in the presence of lanthanides (Ln). Is a key enzyme in methane/methanol metabolism, allowing M.fumariolicum to grow on methane as the sole carbon and energy source. Can also act on other primary alcohols in vitro, such as ethanol, 1-propanol, 1-butanol, and 1-hexanol, but is not able to oxidize secondary alcohols and acetaldehyde. Uses a specific cytochrome cL, encoded by the adjacent gene in the locus, as electron acceptor. In Methylacidiphilum fumariolicum (strain SolV), this protein is Lanthanide-dependent methanol dehydrogenase.